The primary structure comprises 259 residues: Ribosomal RNA large subunit methyltransferase E (259 aa).

S-adenosyl-L-methionine-binding residues include G49, W51, D69, D88, and D112. K152 serves as the catalytic Proton acceptor. The TRAM domain maps to 199 to 257 (PIAEGDEHTVEIVDTGDEGDGIARIEGYTLFVDDAAEGDTVDVTVTDLKPNYGFAERRD).

Belongs to the class I-like SAM-binding methyltransferase superfamily. RNA methyltransferase RlmE family.

It is found in the cytoplasm. The catalysed reaction is uridine(2552) in 23S rRNA + S-adenosyl-L-methionine = 2'-O-methyluridine(2552) in 23S rRNA + S-adenosyl-L-homocysteine + H(+). In terms of biological role, specifically methylates the uridine in position 2552 of 23S rRNA at the 2'-O position of the ribose in the fully assembled 50S ribosomal subunit. This Halobacterium salinarum (strain ATCC 29341 / DSM 671 / R1) protein is Ribosomal RNA large subunit methyltransferase E.